Reading from the N-terminus, the 354-residue chain is Probable L-ascorbate-6-phosphate lactonase UlaG (354 aa).

This sequence belongs to the UlaG family. A divalent metal cation serves as cofactor.

The protein localises to the cytoplasm. It catalyses the reaction L-ascorbate 6-phosphate + H2O = 3-dehydro-L-gulonate 6-phosphate. It functions in the pathway cofactor degradation; L-ascorbate degradation; D-xylulose 5-phosphate from L-ascorbate: step 1/4. In terms of biological role, probably catalyzes the hydrolysis of L-ascorbate-6-P into 3-keto-L-gulonate-6-P. Is essential for L-ascorbate utilization under anaerobic conditions. The polypeptide is Probable L-ascorbate-6-phosphate lactonase UlaG (Escherichia coli (strain SMS-3-5 / SECEC)).